The chain runs to 224 residues: Putative O-methyltransferase MUL_4520 (224 aa).

Residues 1–11 (MHGTDSSSDTP) are compositionally biased toward polar residues. Residues 1-20 (MHGTDSSSDTPGQPAPSRAE) are disordered. Residues Val51, Glu73, 75–76 (GT), Ser81, Asp99, and Ile100 contribute to the S-adenosyl-L-methionine site. Asp147 contacts substrate. Position 149 (Asp149) interacts with S-adenosyl-L-methionine.

This sequence belongs to the class I-like SAM-binding methyltransferase superfamily. Cation-dependent O-methyltransferase family.

This chain is Putative O-methyltransferase MUL_4520, found in Mycobacterium ulcerans (strain Agy99).